The chain runs to 407 residues: Myeloid cell nuclear differentiation antigen (407 aa).

Residues 1–88 (MANEYKKILL…VNNLRKERSK (88 aa)) form the Pyrin domain. The segment at 122–211 (LTSEVGERIP…TRRNVPQKDP (90 aa)) is disordered. Residues 131 to 137 (PVAQKRK) carry the Nuclear localization signal motif. Positions 177 to 199 (HTSSSTPSNTSFAQNQQTQAQCQ) are enriched in low complexity. The HIN-200 domain maps to 196–394 (AQCQVDTRRN…CGSHSFIKVI (199 aa)).

As to quaternary structure, participates in a ternary complex with YY1 and the YY1 target DNA element. Binds nucleolin and nucleophosmin/NPM/B23.

Its subcellular location is the nucleus. It is found in the cytoplasm. May act as a transcriptional activator/repressor in the myeloid lineage. Plays a role in the granulocyte/monocyte cell-specific response to interferon. Stimulates the DNA binding of the transcriptional repressor protein YY1. The polypeptide is Myeloid cell nuclear differentiation antigen (MNDA) (Macaca fascicularis (Crab-eating macaque)).